The primary structure comprises 329 residues: Glycerol-3-phosphate dehydrogenase [NAD(P)+] (329 aa).

3 residues coordinate NADPH: Trp11, Arg30, and Lys103. The sn-glycerol 3-phosphate site is built by Lys103, Gly132, and Ser134. Ala136 contributes to the NADPH binding site. Positions 187, 240, 250, 251, and 252 each coordinate sn-glycerol 3-phosphate. Catalysis depends on Lys187, which acts as the Proton acceptor. Position 251 (Arg251) interacts with NADPH. NADPH contacts are provided by Val275 and Glu277.

It belongs to the NAD-dependent glycerol-3-phosphate dehydrogenase family.

The protein resides in the cytoplasm. It carries out the reaction sn-glycerol 3-phosphate + NAD(+) = dihydroxyacetone phosphate + NADH + H(+). The enzyme catalyses sn-glycerol 3-phosphate + NADP(+) = dihydroxyacetone phosphate + NADPH + H(+). It participates in membrane lipid metabolism; glycerophospholipid metabolism. Functionally, catalyzes the reduction of the glycolytic intermediate dihydroxyacetone phosphate (DHAP) to sn-glycerol 3-phosphate (G3P), the key precursor for phospholipid synthesis. In Nitrosomonas eutropha (strain DSM 101675 / C91 / Nm57), this protein is Glycerol-3-phosphate dehydrogenase [NAD(P)+].